Here is a 144-residue protein sequence, read N- to C-terminus: RxLR effector protein PITG_03192 (144 aa).

Residues 1–24 form the signal peptide; it reads MRVGFVFALLVVSVIVCFNGLTSA. Positions 49–58 match the RxLR-dEER motif; that stretch reads RNLRASGEER. Asn115 carries N-linked (GlcNAc...) asparagine glycosylation. The helical transmembrane segment at 122 to 142 threads the bilayer; that stretch reads FFILATLVMFPIGVWAVVTNY.

It belongs to the RxLR effector family. Interacts with the C-terminal portions the ER-associated potato NAC transcription factors NTP1 and NTP2.

The protein localises to the secreted. The protein resides in the host endoplasmic reticulum membrane. Its function is as follows. Effector that is required for full virulence. Targets host NTP1 and NTP2 transcription factors and prevents their pathogen-associated molecular pattern (PAMP)-triggered re-localization from the endoplasmic reticulum into the nucleus, where they contribute to prevent disease progression by P.infestans. The sequence is that of RxLR effector protein PITG_03192 from Phytophthora infestans (strain T30-4) (Potato late blight agent).